The sequence spans 251 residues: UPF0309 protein SGR_3073 (251 aa).

The SIS domain maps to 36 to 221 (VADTVASGGR…EQLVARGIEP (186 aa)).

It belongs to the UPF0309 family.

In Streptomyces griseus subsp. griseus (strain JCM 4626 / CBS 651.72 / NBRC 13350 / KCC S-0626 / ISP 5235), this protein is UPF0309 protein SGR_3073.